The primary structure comprises 500 residues: Probable betaine aldehyde dehydrogenase (500 aa).

249-254 (GSLATG) provides a ligand contact to NAD(+). The active-site Proton acceptor is the Glu-271. The Nucleophile role is filled by Cys-305.

Belongs to the aldehyde dehydrogenase family.

The catalysed reaction is betaine aldehyde + NAD(+) + H2O = glycine betaine + NADH + 2 H(+). It functions in the pathway amine and polyamine biosynthesis; betaine biosynthesis via choline pathway; betaine from betaine aldehyde: step 1/1. This Schizosaccharomyces pombe (strain 972 / ATCC 24843) (Fission yeast) protein is Probable betaine aldehyde dehydrogenase (meu8).